We begin with the raw amino-acid sequence, 214 residues long: 3-demethoxyubiquinol 3-hydroxylase (214 aa).

Glutamate 63, glutamate 93, histidine 96, glutamate 145, glutamate 177, and histidine 180 together coordinate Fe cation.

The protein belongs to the COQ7 family. Fe cation is required as a cofactor.

It is found in the cell membrane. It catalyses the reaction a 5-methoxy-2-methyl-3-(all-trans-polyprenyl)benzene-1,4-diol + AH2 + O2 = a 3-demethylubiquinol + A + H2O. It functions in the pathway cofactor biosynthesis; ubiquinone biosynthesis. Catalyzes the hydroxylation of 2-nonaprenyl-3-methyl-6-methoxy-1,4-benzoquinol during ubiquinone biosynthesis. The sequence is that of 3-demethoxyubiquinol 3-hydroxylase from Psychrobacter arcticus (strain DSM 17307 / VKM B-2377 / 273-4).